The following is a 338-amino-acid chain: POU domain, class 4, transcription factor 3 (338 aa).

The POU-IV box motif lies at 56-65 (RAEALAAVDI). A disordered region spans residues 91–112 (TSPTVPISHPAALTSHPHHPVH). The region spanning 179-256 (DVESDPRELE…VLQAWLEEAE (78 aa)) is the POU-specific domain. Residues 274 to 333 (RKRKRTSIAAPEKRSLEAYFAIQPRPSSEKIAAIAEKLDLKKNVVRVWFCNQRQKQKRMK) constitute a DNA-binding region (homeobox).

The protein belongs to the POU transcription factor family. In terms of assembly, interacts with ISL1. Expressed in the chochlea of the inner ear.

The protein localises to the nucleus. It localises to the cytoplasm. Its function is as follows. Acts as a transcriptional activator. Acts by binding to sequences related to the consensus octamer motif 5'-ATGCAAAT-3' in the regulatory regions of its target genes. Involved in the auditory system development, required for terminal differentiation of hair cells in the inner ear. This Rattus norvegicus (Rat) protein is POU domain, class 4, transcription factor 3.